A 333-amino-acid chain; its full sequence is PDZ domain-containing protein GIPC1 (333 aa).

Basic residues predominate over residues 1–11 (MPLGLGRRKKA). Positions 1–54 (MPLGLGRRKKAPPLVENEEAEPGRGGLGVGEPGPLGGGGSGGPQMGLPPPPPAL) are disordered. Positions 23-44 (GRGGLGVGEPGPLGGGGSGGPQ) are enriched in gly residues. At Ser-68 the chain carries Phosphoserine. Positions 133-213 (EVEVFKSEDA…GRTFTLKLTE (81 aa)) constitute a PDZ domain. A phosphoserine mark is found at Ser-222, Ser-225, and Ser-232. Residues 223–244 (QRSAGGRPGSGPQLGTGRGTLR) form a disordered region. Gly residues predominate over residues 228 to 240 (GRPGSGPQLGTGR). Thr-242 bears the Phosphothreonine mark. The residue at position 247 (Ser-247) is a Phosphoserine.

The protein belongs to the GIPC family. In terms of assembly, interacts with GLUT1 (C-terminus), ACTN1, KIF1B, MYO6, PLEKHG5, SDC4/syndecan-4 and SEMA4C/semaphorin-4C. Interacts with RGS19 C-terminus. Interacts with HTLV-I Tax through the PDZ domain. Widely expressed. Expressed in skeletal muscle (at protein level).

The protein resides in the cytoplasm. Its subcellular location is the membrane. In terms of biological role, may be involved in G protein-linked signaling. The protein is PDZ domain-containing protein GIPC1 (GIPC1) of Homo sapiens (Human).